Consider the following 390-residue polypeptide: Immunoglobulin mu Fc receptor (390 aa).

The N-terminal stretch at Met-1–Ala-16 is a signal peptide. Over Leu-17–Gly-251 the chain is Extracellular. The Ig-like domain occupies Val-23–His-123. Residues Val-33–Thr-115 form a CDR4 region. Intrachain disulfides connect Cys-37–Cys-104 and Cys-49–Cys-58. The interval Pro-40–Arg-45 is CDR1. The segment at Gly-59–Ala-70 is CDR2. A Phosphothreonine modification is found at Thr-92. Residues Ala-106 to Thr-115 form a CDR3 region. A disordered region spans residues Pro-166–Phe-204. Residues Phe-252–Val-272 traverse the membrane as a helical segment. Topologically, residues Lys-273–Ala-390 are cytoplasmic. 2 stretches are compositionally biased toward low complexity: residues Met-293–Gln-311 and Ala-325–Pro-334. The tract at residues Met-293 to Gln-348 is disordered. Residues Val-335–Pro-346 are compositionally biased toward pro residues.

In terms of assembly, interacts (via Ig-like domain) with IGHM (via CH4/Cmu4 domain), both secreted and membrane-bound IgM; the interaction is glycan-independent and multivalent theoretically involving up to eight binding sites for the IgM pentamer. Post-translationally, phosphorylated on both Tyr and Ser residues. In terms of processing, O-glycosylated. Sialylated. O-linked glycans regulate trafficking to the plasma membrane. In terms of tissue distribution, expressed by CD19-positive B cells and CD4-positive and CD8-positive T cell populations in primary and secondary lymphoid tissues (at protein level). Among B cell subsets, detected in a subset of bone marrow pro- and pre-B cells, in most follicular and memory B cells and in a small subset of germinal center B cells (at protein level). Expressed at lower levels in CD56-positive NK cells (at protein level). Expressed in lymph nodes, lung, thymus and kidneys. Very weak expression detected in spleen, liver, heart, and salivary gland.

The protein localises to the cell membrane. The protein resides in the early endosome membrane. It localises to the golgi apparatus. It is found in the trans-Golgi network membrane. Its subcellular location is the lysosome membrane. The protein localises to the secreted. Its function is as follows. High-affinity Fc receptor for immunoglobulin M (IgM), both secreted and membrane-bound IgM. Primarily regulates IgM transport and homeostasis. In lymphoid cells, enables exocytosis of membrane-bound IgM on the plasma membrane as well as endocytosis of IgM-antigen complexes toward lysosomes for degradation. In mucosal epithelium, mediates retrotranscytosis of antigen-IgM complexes across mucosal M cells toward antigen-presenting cells in mucosal lymphoid tissues. Triggers costimulatory signaling and mediates most of IgM effector functions involved in B cell development and primary immune response to infection. Likely limits tonic IgM BCR signaling to self-antigens for proper negative selection of autoreactive B cells in the bone marrow and for the maintenance of regulatory B cell pool in peripheral lymphoid organs. Mediates antibody responses to T cell-dependent and T cell-independent antigens and promotes induction of an efficient neutralizing IgG response. Engages in cross-talk with antigen-receptor signaling via the non-canonical NF-kappa-B, MAP kinases and calcium signaling pathways. The protein is Immunoglobulin mu Fc receptor of Homo sapiens (Human).